A 314-amino-acid polypeptide reads, in one-letter code: tRNA dimethylallyltransferase (314 aa).

13–20 (GPTASGKS) contributes to the ATP binding site. 15–20 (TASGKS) lines the substrate pocket. Interaction with substrate tRNA stretches follow at residues 38–41 (DSMQ) and 161–165 (QRIAR).

The protein belongs to the IPP transferase family. In terms of assembly, monomer. Requires Mg(2+) as cofactor.

It carries out the reaction adenosine(37) in tRNA + dimethylallyl diphosphate = N(6)-dimethylallyladenosine(37) in tRNA + diphosphate. In terms of biological role, catalyzes the transfer of a dimethylallyl group onto the adenine at position 37 in tRNAs that read codons beginning with uridine, leading to the formation of N6-(dimethylallyl)adenosine (i(6)A). The chain is tRNA dimethylallyltransferase from Parvibaculum lavamentivorans (strain DS-1 / DSM 13023 / NCIMB 13966).